The following is a 121-amino-acid chain: Flagellar protein FliT (121 aa).

Residues 1 to 50 form a required for homodimerization region; that stretch reads MNHAPHLYFAWQQLVEKSQLMLRLATEEQWDELIASEMAYVNAVQEIAHL. The tract at residues 60-98 is fliD binding; the sequence is MQEQLRPMLRLILDNESKVKQLLQIRMDELAKLVGQSSV.

Belongs to the FliT family. In terms of assembly, homodimer. Interacts with FliD and FlhC.

The protein localises to the cytoplasm. Its subcellular location is the cytosol. Dual-function protein that regulates the transcription of class 2 flagellar operons and that also acts as an export chaperone for the filament-capping protein FliD. As a transcriptional regulator, acts as an anti-FlhDC factor; it directly binds FlhC, thus inhibiting the binding of the FlhC/FlhD complex to class 2 promoters, resulting in decreased expression of class 2 flagellar operons. As a chaperone, effects FliD transition to the membrane by preventing its premature polymerization, and by directing it to the export apparatus. The polypeptide is Flagellar protein FliT (Escherichia coli O139:H28 (strain E24377A / ETEC)).